A 372-amino-acid polypeptide reads, in one-letter code: MTSIKPIHNGKKVIVGMSGGVDSSVSAYLLMQQGYEVEGLFMKNWEEDDTDEYCAAADDLKDAQAVCDKLGIKMHTVNFAAEYWDNVFEYFLAEYKAGRTPNPDIMCNKEIKFKAFLEFADDILDADYIAMGHYVRRRDNSDGSVQMLRGVDGNKDQSYFLYTLSHEQVARSLFPVGELEKHEVRDIAKQMGLITHDKKDSTGICFIGERKFTDFLATYLPAQPGDIETPEGEVIGKHQGLMYHTLGQRKGLGIGGLKDSNEDPWYVVEKDLLRNVLIVAQGGNHPRLMSQGMTVNQLHWVDRKGPATDSQLVVKTRYRQTDVPCRISFDDPQRITVIFDSPVAAVTPGQSAVFYDGDVCLGGGIIDSLIRG.

ATP contacts are provided by residues 16–23 and M42; that span reads GMSGGVDS. The interval 102 to 104 is interaction with target base in tRNA; it reads NPD. The active-site Nucleophile is the C107. Cysteines 107 and 205 form a disulfide. G132 lines the ATP pocket. The tract at residues 155–157 is interaction with tRNA; it reads KDQ. The Cysteine persulfide intermediate role is filled by C205. The interaction with tRNA stretch occupies residues 317–318; the sequence is RY.

Belongs to the MnmA/TRMU family.

It is found in the cytoplasm. The enzyme catalyses S-sulfanyl-L-cysteinyl-[protein] + uridine(34) in tRNA + AH2 + ATP = 2-thiouridine(34) in tRNA + L-cysteinyl-[protein] + A + AMP + diphosphate + H(+). Its function is as follows. Catalyzes the 2-thiolation of uridine at the wobble position (U34) of tRNA, leading to the formation of s(2)U34. This is tRNA-specific 2-thiouridylase MnmA from Shewanella denitrificans (strain OS217 / ATCC BAA-1090 / DSM 15013).